We begin with the raw amino-acid sequence, 397 residues long: Elongation factor Tu (397 aa).

Residues Lys10 to Gln207 enclose the tr-type G domain. The tract at residues Gly19 to Thr26 is G1. Position 19 to 26 (Gly19 to Thr26) interacts with GTP. Position 26 (Thr26) interacts with Mg(2+). The segment at Gly60–Ala64 is G2. Residues Asp81–Gly84 form a G3 region. Residues Asp81–His85 and Asn136–Asp139 each bind GTP. The G4 stretch occupies residues Asn136–Asp139. The interval Ser174–Leu176 is G5.

Belongs to the TRAFAC class translation factor GTPase superfamily. Classic translation factor GTPase family. EF-Tu/EF-1A subfamily. As to quaternary structure, monomer.

Its subcellular location is the cytoplasm. It carries out the reaction GTP + H2O = GDP + phosphate + H(+). Functionally, GTP hydrolase that promotes the GTP-dependent binding of aminoacyl-tRNA to the A-site of ribosomes during protein biosynthesis. In Nitratidesulfovibrio vulgaris (strain ATCC 29579 / DSM 644 / CCUG 34227 / NCIMB 8303 / VKM B-1760 / Hildenborough) (Desulfovibrio vulgaris), this protein is Elongation factor Tu.